A 187-amino-acid chain; its full sequence is Probable chorismate pyruvate-lyase (187 aa).

Positions 80, 118, and 170 each coordinate substrate.

The protein belongs to the UbiC family.

The protein resides in the cytoplasm. The enzyme catalyses chorismate = 4-hydroxybenzoate + pyruvate. It functions in the pathway cofactor biosynthesis; ubiquinone biosynthesis. Its function is as follows. Removes the pyruvyl group from chorismate, with concomitant aromatization of the ring, to provide 4-hydroxybenzoate (4HB) for the ubiquinone pathway. The chain is Probable chorismate pyruvate-lyase from Pseudomonas fluorescens (strain ATCC BAA-477 / NRRL B-23932 / Pf-5).